A 127-amino-acid chain; its full sequence is MSKASYVKFEVPQDLADKVLEAVRKAKESGKIKKGTNETTKAVERGQAKLVVIAEDVQPEEIVAHLPLLCDEKKIPYVYVSSKKALGEACGLQVATASAAILEPGEAKDLVDEIVKRVNEIKGKTSS.

Belongs to the eukaryotic ribosomal protein eL8 family. In terms of assembly, part of the 50S ribosomal subunit. Probably part of the RNase P complex.

The protein resides in the cytoplasm. In terms of biological role, multifunctional RNA-binding protein that recognizes the K-turn motif in ribosomal RNA, the RNA component of RNase P, box H/ACA, box C/D and box C'/D' sRNAs. The chain is Large ribosomal subunit protein eL8 from Saccharolobus islandicus (strain Y.N.15.51 / Yellowstone #2) (Sulfolobus islandicus).